A 563-amino-acid chain; its full sequence is Arginine--tRNA ligase (563 aa).

Positions 121 to 131 (PNIAKPFSIGH) match the 'HIGH' region motif.

Belongs to the class-I aminoacyl-tRNA synthetase family. In terms of assembly, monomer.

It localises to the cytoplasm. The enzyme catalyses tRNA(Arg) + L-arginine + ATP = L-arginyl-tRNA(Arg) + AMP + diphosphate. The polypeptide is Arginine--tRNA ligase (Streptococcus pyogenes serotype M49 (strain NZ131)).